A 127-amino-acid polypeptide reads, in one-letter code: Fluoride-specific ion channel FluC (127 aa).

4 consecutive transmembrane segments (helical) span residues 4 to 24, 35 to 55, 71 to 91, and 101 to 121; these read LLCA…WLGM, IGTL…LAWF, TGFC…VFLL, and LNVM…FWLF. G75 and T78 together coordinate Na(+).

It belongs to the fluoride channel Fluc/FEX (TC 1.A.43) family.

It localises to the cell inner membrane. The enzyme catalyses fluoride(in) = fluoride(out). Its activity is regulated as follows. Na(+) is not transported, but it plays an essential structural role and its presence is essential for fluoride channel function. Its function is as follows. Fluoride-specific ion channel. Important for reducing fluoride concentration in the cell, thus reducing its toxicity. This is Fluoride-specific ion channel FluC from Klebsiella pneumoniae (strain 342).